The sequence spans 229 residues: Dolichyldiphosphatase 1 (229 aa).

The next 4 helical transmembrane spans lie at 27 to 47, 94 to 114, 120 to 140, and 156 to 176; these read LFNAYVTLIPIAIAIGVITLI, MPSSHSQFMFFFAVLMTLFYL, FGSKILPIISVTFLFFLAAGV, and FCGSFIGICLGFIWYGVIEYI.

The protein belongs to the dolichyldiphosphatase family.

It localises to the endoplasmic reticulum membrane. The enzyme catalyses a di-trans,poly-cis-dolichyl diphosphate + H2O = a di-trans,poly-cis-dolichyl phosphate + phosphate + H(+). Its pathway is protein modification; protein glycosylation. Its function is as follows. Required for efficient N-glycosylation. Necessary for maintaining optimal levels of dolichol-linked oligosaccharides. Hydrolyzes dolichyl pyrophosphate at a very high rate and dolichyl monophosphate at a much lower rate. Does not act on phosphatidate. The protein is Dolichyldiphosphatase 1 (dolpp1) of Dictyostelium discoideum (Social amoeba).